Here is a 255-residue protein sequence, read N- to C-terminus: Na(+)-translocating NADH-quinone reductase subunit C (255 aa).

Residues L12 to G32 traverse the membrane as a helical segment. T223 carries the FMN phosphoryl threonine modification.

The protein belongs to the NqrC family. Composed of six subunits; NqrA, NqrB, NqrC, NqrD, NqrE and NqrF. It depends on FMN as a cofactor.

The protein resides in the cell inner membrane. The catalysed reaction is a ubiquinone + n Na(+)(in) + NADH + H(+) = a ubiquinol + n Na(+)(out) + NAD(+). In terms of biological role, NQR complex catalyzes the reduction of ubiquinone-1 to ubiquinol by two successive reactions, coupled with the transport of Na(+) ions from the cytoplasm to the periplasm. NqrA to NqrE are probably involved in the second step, the conversion of ubisemiquinone to ubiquinol. The polypeptide is Na(+)-translocating NADH-quinone reductase subunit C (Vibrio anguillarum (Listonella anguillarum)).